The following is a 641-amino-acid chain: Peroxisomal targeting signal 1 receptor (641 aa).

Cysteine 12 is covalently cross-linked (Glycyl cysteine thioester (Cys-Gly) (interchain with G-Cter in ubiquitin)). The interval 12-34 (CSEPNALGNFVQHFTNERSYHDK) is amphipathic helix 1 (AH1). The interval 74 to 92 (HLMMDRHLNLRDGPREHKE) is amphipathic helix 2 (AH2). The segment at 261-288 (VEAAWDETARRTISDITRPITQINDPKL) is amphipathic helix 4 (AH4). The short motif at 331–335 (WTEDY) is the WxxxF/Y motif element. TPR repeat units lie at residues 359–392 (DSDT…NPEN), 393–426 (AMAW…DPTN), 427–460 (SKAR…TPEY), 503–536 (PEVQ…SPTD), 538–570 (QLWN…KPSY), and 571–604 (VRAR…HPAP).

It belongs to the peroxisomal targeting signal receptor family. In terms of assembly, interacts (via WxxxF/Y and LVxEF motifs) with PEX14; promoting translocation through the PEX13-PEX14 docking complex. Interacts with PEX7, promoting peroxisomal import of proteins containing a C-terminal PTS2-type peroxisomal targeting signal. In terms of processing, monoubiquitinated at Cys-12 by PEX2 during PEX5 passage through the retrotranslocation channel. Cys-12 monoubiquitination acts as a recognition signal for the PEX1-PEX6 complex and is required for PEX5 extraction and export from peroxisomes. When PEX5 recycling is compromised, polyubiquitinated by PEX10 during its passage through the retrotranslocation channel, leading to its degradation.

Its subcellular location is the cytoplasm. It is found in the cytosol. It localises to the peroxisome matrix. Functionally, receptor that mediates peroxisomal import of proteins containing a C-terminal PTS1-type tripeptide peroxisomal targeting signal (SKL-type). Binds to cargo proteins containing a PTS1 peroxisomal targeting signal in the cytosol, and translocates them into the peroxisome matrix by passing through the PEX13-PEX14 docking complex along with cargo proteins. PEX5 receptor is then retrotranslocated into the cytosol, leading to release of bound cargo in the peroxisome matrix, and reset for a subsequent peroxisome import cycle. Its function is as follows. In addition to promoting peroxisomal translocation of proteins containing a PTS1 peroxisomal targeting signal, mediates peroxisomal import of proteins containing a C-terminal PTS2-type peroxisomal targeting signal via its interaction with PEX7. Interaction with PEX7 only takes place when PEX7 is associated with cargo proteins containing a PTS2 peroxisomal targeting signal. PEX7 along with PTS2-containing cargo proteins are then translocated through the PEX13-PEX14 docking complex together with PEX5. In Dictyostelium discoideum (Social amoeba), this protein is Peroxisomal targeting signal 1 receptor (pex5).